The primary structure comprises 476 residues: Glycogen synthase (476 aa).

K15 contacts ADP-alpha-D-glucose.

It belongs to the glycosyltransferase 1 family. Bacterial/plant glycogen synthase subfamily.

The catalysed reaction is [(1-&gt;4)-alpha-D-glucosyl](n) + ADP-alpha-D-glucose = [(1-&gt;4)-alpha-D-glucosyl](n+1) + ADP + H(+). It participates in glycan biosynthesis; glycogen biosynthesis. Functionally, synthesizes alpha-1,4-glucan chains using ADP-glucose. This is Glycogen synthase from Streptococcus agalactiae serotype Ia (strain ATCC 27591 / A909 / CDC SS700).